A 416-amino-acid chain; its full sequence is Tyrosine--tRNA ligase (416 aa).

L-tyrosine is bound at residue Tyr-34. Residues 39–48 (PTGDSLHIGH) carry the 'HIGH' region motif. Residues Tyr-165 and Gln-169 each contribute to the L-tyrosine site. The 'KMSKS' region signature appears at 227-231 (KFGKT). Lys-230 is a binding site for ATP. The S4 RNA-binding domain maps to 349–416 (KNIVEWLVDT…KKKYFLARVK (68 aa)).

The protein belongs to the class-I aminoacyl-tRNA synthetase family. TyrS type 1 subfamily. Homodimer.

It localises to the cytoplasm. It catalyses the reaction tRNA(Tyr) + L-tyrosine + ATP = L-tyrosyl-tRNA(Tyr) + AMP + diphosphate + H(+). In terms of biological role, catalyzes the attachment of tyrosine to tRNA(Tyr) in a two-step reaction: tyrosine is first activated by ATP to form Tyr-AMP and then transferred to the acceptor end of tRNA(Tyr). This Ligilactobacillus salivarius (strain UCC118) (Lactobacillus salivarius) protein is Tyrosine--tRNA ligase.